Consider the following 409-residue polypeptide: MQPPIPAPLKHVSRTPATPAVAKALTRLQCWPGEQRVAVGLSGGVDSSLSAALLVEAGWQVEGLTLWLMSGKGACCSDGLIDAAGICEQLKIPHHVVDSRATFQAEIVDQLVQGYQQGVTPLPCSRCNRSVKFAAMLSWAEKERQLHRVATGHYARIRHREDPEPQQALPGDSSGRHQLLRGLDQNKDQSYFLYDLSQDVLAKVIFPLGELTKAETRQEAERYGLRTAKKAESQDLCLADHYGSMKAFLDNYLPARQGEIVLQDGKVVGEHDGIEHFTIGQRKGLGVAWREPLHVVQLDATANRVIVAPRAEAGRDSCVVGAVNWISIAPPSSAIDVEVQVRYRSGPVAAQLIPIEATAEDIAADRPHRCRLTFNEEQFSITPGQAAVFYAADAVLGGGLIQQINTASS.

ATP contacts are provided by residues 40–47 and Leu-66; that span reads GLSGGVDS. Cys-127 functions as the Nucleophile in the catalytic mechanism. A disulfide bond links Cys-127 and Cys-237. Gly-152 serves as a coordination point for ATP. Residues 156–179 form a disordered region; that stretch reads RIRHREDPEPQQALPGDSSGRHQL. The tract at residues 187–189 is interaction with tRNA; the sequence is KDQ. The active-site Cysteine persulfide intermediate is the Cys-237. The interaction with tRNA stretch occupies residues 342 to 343; that stretch reads RY.

It belongs to the MnmA/TRMU family.

It localises to the cytoplasm. The catalysed reaction is S-sulfanyl-L-cysteinyl-[protein] + uridine(34) in tRNA + AH2 + ATP = 2-thiouridine(34) in tRNA + L-cysteinyl-[protein] + A + AMP + diphosphate + H(+). Functionally, catalyzes the 2-thiolation of uridine at the wobble position (U34) of tRNA, leading to the formation of s(2)U34. This is tRNA-specific 2-thiouridylase MnmA from Prochlorococcus marinus (strain MIT 9303).